We begin with the raw amino-acid sequence, 365 residues long: UDP-N-acetylglucosamine--N-acetylmuramyl-(pentapeptide) pyrophosphoryl-undecaprenol N-acetylglucosamine transferase (365 aa).

Residues 17–19 (TGG), N129, R167, S194, I250, 269–274 (ALTVSE), and Q295 contribute to the UDP-N-acetyl-alpha-D-glucosamine site.

Belongs to the glycosyltransferase 28 family. MurG subfamily.

The protein localises to the cell inner membrane. The catalysed reaction is di-trans,octa-cis-undecaprenyl diphospho-N-acetyl-alpha-D-muramoyl-L-alanyl-D-glutamyl-meso-2,6-diaminopimeloyl-D-alanyl-D-alanine + UDP-N-acetyl-alpha-D-glucosamine = di-trans,octa-cis-undecaprenyl diphospho-[N-acetyl-alpha-D-glucosaminyl-(1-&gt;4)]-N-acetyl-alpha-D-muramoyl-L-alanyl-D-glutamyl-meso-2,6-diaminopimeloyl-D-alanyl-D-alanine + UDP + H(+). It participates in cell wall biogenesis; peptidoglycan biosynthesis. In terms of biological role, cell wall formation. Catalyzes the transfer of a GlcNAc subunit on undecaprenyl-pyrophosphoryl-MurNAc-pentapeptide (lipid intermediate I) to form undecaprenyl-pyrophosphoryl-MurNAc-(pentapeptide)GlcNAc (lipid intermediate II). This chain is UDP-N-acetylglucosamine--N-acetylmuramyl-(pentapeptide) pyrophosphoryl-undecaprenol N-acetylglucosamine transferase, found in Shewanella woodyi (strain ATCC 51908 / MS32).